Consider the following 380-residue polypeptide: Endo-chitosanase C (380 aa).

Positions Met-1–Gly-22 are cleaved as a signal peptide. Residues Cys-276 to Cys-304 form an R3-1 repeat. Residues Glu-311 to Cys-341 form an R3-2 repeat. The R3-3 repeat unit spans residues Glu-348–Cys-378.

Belongs to the glycosyl hydrolase 75 family.

It is found in the secreted. It carries out the reaction Endohydrolysis of beta-(1-&gt;4)-linkages between D-glucosamine residues in a partly acetylated chitosan.. In terms of biological role, chitosanase catalyzing the endo-type cleavage of chitosan, the deacylated form of chitin. Chitosanase may be crucial in the degradation of the deacetylated portion of chitin in the fungal cell wall. Chitoolisaccharides produced by the hydrolysis of partially N-acetylated chitosan are known to have many biological activities, including antibacterial activity, immune-enhancing effects, and elicitor activity. In Aspergillus oryzae (Yellow koji mold), this protein is Endo-chitosanase C (csnC).